A 255-amino-acid chain; its full sequence is Acetylglutamate kinase (255 aa).

Substrate is bound by residues 40-41 (GG), Arg-62, and Asn-153.

The protein belongs to the acetylglutamate kinase family. ArgB subfamily.

It is found in the cytoplasm. It catalyses the reaction N-acetyl-L-glutamate + ATP = N-acetyl-L-glutamyl 5-phosphate + ADP. It functions in the pathway amino-acid biosynthesis; L-arginine biosynthesis; N(2)-acetyl-L-ornithine from L-glutamate: step 2/4. In terms of biological role, catalyzes the ATP-dependent phosphorylation of N-acetyl-L-glutamate. The chain is Acetylglutamate kinase from Bacillus anthracis (strain A0248).